The primary structure comprises 631 residues: MSTTKLTRREQREHAQRFIDTLAGTAFPNSRRIYVHGSQADIRVPMREIELSPTLVGGDKDNPRYEANEPIPVYDTSGPYGDPDIGIDVRQGLAKLRQPWIDARNDCAPLSERSSAYTKARLADDGLDELRFSGLLTPKRAVAGKCVTQLHYARQGIVTPEMEFIAIRENMGRERIRSEVLRQQHAGEGFGARLPENITPEFVRDEVAAGRAIIPANINHPESEPMIIGRNFLVKVNANIGNSAVTSSIEEEVEKLVWSTRWGADTVMDLSTGRYIHETREWILRNSPVPIGTVPIYQALEKVNGIAENLTWEAFRDTLLEQAEQGVDYFTIHAGVLLRYVPMTAKRLTGIVSRGGSIMAKWCLSHHQENFLYQHFREICEICAAYDVSLSLGDGLRPGSIQDANDEAQFSELRTLGELTKIAWEYDVQVMIEGPGHVPMQMIRRNMTEELEHCHEAPFYTLGPLTTDIAPGYDHFTSGIGAAMIGWFGCAMLCYVTPKEHLGLPNKEDVKQGLITYKIAAHAADLAKGHPGAQIRDNAMSKARFEFRWEDQFNLALDPFTARAYHDETLPQESGKVAHFCSMCGPKFCSMKITQEVRDYAAKQNIEAGMADMSHHFRARGGEIYLKQEEA.

Substrate contacts are provided by residues Asn-239, Met-268, Tyr-297, His-333, Ser-353–Gly-355, Asp-394–Arg-397, and Glu-433. His-437 lines the Zn(2+) pocket. Tyr-460 lines the substrate pocket. A Zn(2+)-binding site is contributed by His-501. [4Fe-4S] cluster contacts are provided by Cys-581, Cys-584, and Cys-589.

This sequence belongs to the ThiC family. In terms of assembly, homodimer. The cofactor is [4Fe-4S] cluster.

It catalyses the reaction 5-amino-1-(5-phospho-beta-D-ribosyl)imidazole + S-adenosyl-L-methionine = 4-amino-2-methyl-5-(phosphooxymethyl)pyrimidine + CO + 5'-deoxyadenosine + formate + L-methionine + 3 H(+). Its pathway is cofactor biosynthesis; thiamine diphosphate biosynthesis. Catalyzes the synthesis of the hydroxymethylpyrimidine phosphate (HMP-P) moiety of thiamine from aminoimidazole ribotide (AIR) in a radical S-adenosyl-L-methionine (SAM)-dependent reaction. This Klebsiella pneumoniae (strain 342) protein is Phosphomethylpyrimidine synthase.